We begin with the raw amino-acid sequence, 112 residues long: Mu-ctenitoxin-Pn1a (112 aa).

The N-terminal stretch at 1–19 (MKLLGIFLVASFAFVLSFG) is a signal peptide. Residues 20-33 (EEMIEGENPLEDQR) constitute a propeptide that is removed on maturation. Disulfide bonds link Cys39–Cys56, Cys46–Cys62, Cys53–Cys85, Cys55–Cys73, Cys64–Cys71, Cys91–Cys106, and Cys102–Cys110. Residue Gly111 is modified to Glycine amide.

The protein belongs to the neurotoxin 04 (omega-agtx) family. 02 (Tx1) subfamily. Contains 7 disulfide bonds. As to expression, expressed by the venom gland.

Its subcellular location is the secreted. In terms of biological role, reversible inhibitor of neuronal sodium channels (Nav1.2/ SCN2A) that binds in proximity to site 1 and displays increasing affinity as the membrane potential is depolarized. Induces excitatory symptoms and spastic paralysis in mice. The polypeptide is Mu-ctenitoxin-Pn1a (Phoneutria nigriventer (Brazilian armed spider)).